The primary structure comprises 77 residues: U11-lycotoxin-Ls1a (77 aa).

Residues 1 to 20 (MKLIILTGLVLFAIVSFIEA) form the signal peptide. Positions 21–26 (EEETGR) are excised as a propeptide.

It belongs to the neurotoxin 19 (CSTX) family. 10 (U11-Lctx) subfamily. Post-translationally, contains 4 disulfide bonds. In terms of tissue distribution, expressed by the venom gland.

The protein localises to the secreted. The polypeptide is U11-lycotoxin-Ls1a (Lycosa singoriensis (Wolf spider)).